Reading from the N-terminus, the 413-residue chain is Gamma-glutamyl phosphate reductase (413 aa).

It belongs to the gamma-glutamyl phosphate reductase family.

It is found in the cytoplasm. It carries out the reaction L-glutamate 5-semialdehyde + phosphate + NADP(+) = L-glutamyl 5-phosphate + NADPH + H(+). It participates in amino-acid biosynthesis; L-proline biosynthesis; L-glutamate 5-semialdehyde from L-glutamate: step 2/2. Its function is as follows. Catalyzes the NADPH-dependent reduction of L-glutamate 5-phosphate into L-glutamate 5-semialdehyde and phosphate. The product spontaneously undergoes cyclization to form 1-pyrroline-5-carboxylate. This chain is Gamma-glutamyl phosphate reductase, found in Thermus thermophilus (strain ATCC 27634 / DSM 579 / HB8).